A 293-amino-acid chain; its full sequence is Undecaprenyl-diphosphatase (293 aa).

8 helical membrane-spanning segments follow: residues 3–23 (IALA…EFLP), 43–63 (KGKI…CWEF), 85–105 (VNVI…GKWI), 109–129 (LFNP…ILLA), 178–198 (FALV…MLFG), 203–223 (VATE…TVYE), 238–258 (IFAV…RWLL), and 269–289 (FAWY…TGVI).

The protein belongs to the UppP family.

It localises to the cell inner membrane. It carries out the reaction di-trans,octa-cis-undecaprenyl diphosphate + H2O = di-trans,octa-cis-undecaprenyl phosphate + phosphate + H(+). Functionally, catalyzes the dephosphorylation of undecaprenyl diphosphate (UPP). Confers resistance to bacitracin. In Cupriavidus metallidurans (strain ATCC 43123 / DSM 2839 / NBRC 102507 / CH34) (Ralstonia metallidurans), this protein is Undecaprenyl-diphosphatase.